The primary structure comprises 414 residues: Enolase (414 aa).

(2R)-2-phosphoglycerate is bound at residue Gln162. Residue Glu204 is the Proton donor of the active site. Mg(2+) is bound by residues Asp239, Glu280, and Asp307. Residues Lys332, Arg361, Ser362, and Lys383 each coordinate (2R)-2-phosphoglycerate. Lys332 functions as the Proton acceptor in the catalytic mechanism.

Belongs to the enolase family. It depends on Mg(2+) as a cofactor.

It is found in the cytoplasm. The protein resides in the secreted. The protein localises to the cell surface. It carries out the reaction (2R)-2-phosphoglycerate = phosphoenolpyruvate + H2O. It participates in carbohydrate degradation; glycolysis; pyruvate from D-glyceraldehyde 3-phosphate: step 4/5. Catalyzes the reversible conversion of 2-phosphoglycerate (2-PG) into phosphoenolpyruvate (PEP). It is essential for the degradation of carbohydrates via glycolysis. The protein is Enolase of Campylobacter jejuni subsp. jejuni serotype O:6 (strain 81116 / NCTC 11828).